Consider the following 112-residue polypeptide: Protein SMALL AUXIN UP-REGULATED RNA 10 (112 aa).

The protein belongs to the ARG7 family. In terms of tissue distribution, confined to the veins and petioles of rosette leaves and cauline leaves, and specifically expressed at the abaxial side of inflorescence branche; relocates to both the adaxial (Ad) and abaxial (Ab) sides of the branch in reduced red:far-red (R:FR) light, during shade. Also present in flowers.

Its subcellular location is the cell membrane. In terms of biological role, provide a mechanistic link between auxin and plasma membrane H(+)-ATPases (PM H(+)-ATPases, e.g. AHA1 and AHA2), and triggers PM H(+)-ATPases activity by promoting phosphorylation of their C-terminal autoinhibitory domain as a result of PP2C-D subfamily of type 2C phosphatases inhibition, thus leading to the acidification of the apoplast and the facilitation of solutes and water uptake to drive cell expansion. Triggers plant growth probably by promoting cell elongation. Regulates branch angles and bending. In Arabidopsis thaliana (Mouse-ear cress), this protein is Protein SMALL AUXIN UP-REGULATED RNA 10.